Consider the following 925-residue polypeptide: Neuronal PAS domain-containing protein 3 (925 aa).

Positions 58 to 111 (LRKEKSRDAARSRRGKENFEFYELAKLLPLPAAITSQLDKASIIRLTISYLKMR) constitute a bHLH domain. Residues 60-71 (KEKSRDAARSRR) form a DNA-binding region. Disordered stretches follow at residues 119–138 (PPWN…KGAQ) and 219–257 (LPPG…SPSL). The 71-residue stretch at 152-222 (EAHLGSHILQ…EQLGMKLPPG (71 aa)) folds into the PAS 1 domain. The segment covering 234-256 (AASSASSSSQSETPEPVETTSPS) has biased composition (low complexity). Positions 324 to 394 (PPPTINEVRI…HSHLDLLNKG (71 aa)) constitute a PAS 2 domain. Positions 398-441 (TKYYRWMQKNGGYIWIQSSATIAINAKNANEKNIIWVNYLLSNP) constitute a PAC domain. Disordered regions lie at residues 457-555 (PEKA…FGAL), 576-645 (PCES…SSPH), and 664-774 (NESS…GASN). Composition is skewed to basic and acidic residues over residues 484 to 493 (ENSKSDEKGN) and 529 to 549 (DSRD…KAAE). Residues 601-622 (KHQKRKRRRKRQKGGSASRRRL) show a composition bias toward basic residues. Polar residues predominate over residues 680–690 (NESPYSMTKPP). Composition is skewed to gly residues over residues 700–710 (GQGGSIGGGGA) and 760–771 (GGGAGSGGGGPG).

Efficient DNA binding requires dimerization with another bHLH protein. Interacts with ARNT; forms a heterodimer that binds core DNA sequence 5'-[AG]CGTG-3' within the hypoxia response element (HRE) of target gene promoters. As to expression, detected exclusively in adult brain in inhibitory interneurons.

Its subcellular location is the nucleus. In terms of biological role, may play a broad role in neurogenesis. May control regulatory pathways relevant to schizophrenia and to psychotic illness. The chain is Neuronal PAS domain-containing protein 3 (Npas3) from Mus musculus (Mouse).